We begin with the raw amino-acid sequence, 278 residues long: Proteolipid protein DM beta (278 aa).

A run of 4 helical transmembrane segments spans residues 30–46, 84–100, 130–146, and 213–229; these read LIATILLYAGVALFCGC, VIYGVAAAFFVYGILLM, FIMLTYIFMLAWLGVTA, and LFIVALAGAGAAVIAMV.

This sequence belongs to the myelin proteolipid protein family.

It localises to the membrane. The sequence is that of Proteolipid protein DM beta from Squalus acanthias (Spiny dogfish).